The chain runs to 793 residues: Short transient receptor potential channel 1 (793 aa).

A disordered region spans residues 1–30 (MMAALYPSTDLSGASSSSLPSSPSSSSPNE). The Cytoplasmic segment spans residues 1 to 345 (MMAALYPSTD…FGQMSGYRRK (345 aa)). Low complexity predominate over residues 15 to 28 (SSSSLPSSPSSSSP). ANK repeat units lie at residues 46–75 (LNEK…SGDL), 83–109 (LGRN…YGCQ), 111–156 (ADAL…EYST), and 158–180 (MDVA…MLLK). 4 residues coordinate Zn(2+): histidine 189, cysteine 193, cysteine 195, and cysteine 198. Positions 346-379 (PTCKKIMTVLTVGIFWPVLSLCYLIAPKSQFGRI) form an intramembrane region, discontinuously helical. Topologically, residues 380–386 (IHTPFMK) are cytoplasmic. The helical transmembrane segment at 387–404 (FIIHGASYFTFLLLLNLY) threads the bilayer. Over 405–422 (SLVYNEDKKNTMGPALER) the chain is Extracellular. The chain crosses the membrane as a helical span at residues 423 to 439 (IDYLLILWIIGMIWSDI). Over 440-455 (KRLWYEGLEDFLEESR) the chain is Cytoplasmic. A helical transmembrane segment spans residues 456–475 (NQLSFVMNSLYLATFALKVV). Over 476–496 (AHNKFHDFADRKDWDAFHPTL) the chain is Extracellular. The chain crosses the membrane as a helical span at residues 497 to 517 (VAEGLFAFANVLSYLRLFFMY). Residues 518 to 536 (TTSSILGPLQISMGQMLQD) are Cytoplasmic-facing. A helical membrane pass occupies residues 537–558 (FGKFLGMFLLVLFSFTIGLTQL). The Extracellular segment spans residues 559–623 (YDKGYTSKEQ…GEELQSFVGA (65 aa)). A disulfide bridge connects residues cysteine 571 and cysteine 576. Residues 624 to 644 (VIVGTYNVVVVIVLTKLLVAM) form a helical membrane-spanning segment. Topologically, residues 645–793 (LHKSFQLIAN…SKYAMFYPRN (149 aa)) are cytoplasmic.

This sequence belongs to the transient receptor (TC 1.A.4) family. STrpC subfamily. TRPC1 sub-subfamily. In terms of assembly, heterotetramer with TRPC4 and/or TRPC5. Forms a heteromeric ion channel with TRPC4, with a 1:3 TRPC1:TRPC4 stoichiometry. Unlike other TRP channel proteins, does not form a homomeric channel. Interacts with TRPC4AP. Interacts with ITPR3. Interacts with MX1 and RNF24. Interacts with FKBP4. Interacts with PLSCR1. Interacts with PKD2L2. Forms a heterotetramer with PKD2 with a 2:2 stoichiometry; has distinct channel properties separate from PKD2 or TRPC1 homomers alone. As to quaternary structure, interacts with isoform 2 of TRPC3. Activation of PRKCA induces phosphorylation of TRPC1 and subsequent Ca2+ entry into cells. As to expression, seems to be ubiquitous.

The protein localises to the cell membrane. The enzyme catalyses Ca(2+)(in) = Ca(2+)(out). It carries out the reaction Na(+)(in) = Na(+)(out). It catalyses the reaction Li(+)(in) = Li(+)(out). The catalysed reaction is Cs(+)(in) = Cs(+)(out). With respect to regulation, may be operated by a phosphatidylinositol second messenger system activated by receptor tyrosine kinases or G-protein coupled receptors. Also activated by intracellular calcium store depletion. Inhibited by xanthine-based inhibitor Pico145. Its function is as follows. Forms a receptor-activated non-selective calcium permeant cation channel. Forms a heteromeric ion channel with TRPC4 or TRPC5 that has reduced calcium permeability compared to the homomeric TRPC4 or TRPC5 channel. Also permeable to monovalent ions including sodium, lithium and cesium ions. Functionally, forms a receptor-activated non-selective calcium permeant cation channel. Also activated by intracellular calcium store depletion. This chain is Short transient receptor potential channel 1 (TRPC1), found in Homo sapiens (Human).